A 158-amino-acid polypeptide reads, in one-letter code: MDNKLTHFDNKGNAVMVDVSNKNETERIAIATGTVKASSETIELIKSDQIGKGDVLGVARVAGIMAMKNTSNLIPMCHPVMITGSSIDFEIDSEKNEIRITATSKVVHKTGVEMEALTGVSIAALTIYDMCKAVDKRMVIGDIHLVKKLGGKSGEFNF.

Substrate-binding positions include 76 to 78 (MCH) and 114 to 115 (ME). Asp-129 is a catalytic residue.

The protein belongs to the MoaC family. Homohexamer; trimer of dimers.

It carries out the reaction (8S)-3',8-cyclo-7,8-dihydroguanosine 5'-triphosphate = cyclic pyranopterin phosphate + diphosphate. It functions in the pathway cofactor biosynthesis; molybdopterin biosynthesis. Functionally, catalyzes the conversion of (8S)-3',8-cyclo-7,8-dihydroguanosine 5'-triphosphate to cyclic pyranopterin monophosphate (cPMP). In Clostridium perfringens (strain SM101 / Type A), this protein is Cyclic pyranopterin monophosphate synthase.